We begin with the raw amino-acid sequence, 385 residues long: Glucans biosynthesis protein C (385 aa).

The next 10 helical transmembrane spans lie at 17-37 (AWLMLLGIPFHISLIYSSHTW), 60-80 (MQVFFVISGYFSYMLFLRYPL), 91-111 (VGIPMLTAIPLLTLPQFIMLQ), 137-157 (ISHLWFLLVLVVMTTLCVWIF), 173-193 (KFSMVKLSVIFLCLGIGYAVI), 212-232 (FIVMQTLFYLPFFILGALAFI), 239-259 (LFTTPSRGCTLAAALAFVAYL), 274-294 (TESVITMVLGLWMVNVVFSFG), 311-331 (ASLFIYLVHHPLTLFFGAYIT), and 338-358 (WLGFLCGLIFVVGIAIILYEI).

It belongs to the acyltransferase 3 family. OpgC subfamily.

It localises to the cell membrane. The protein operates within glycan metabolism; osmoregulated periplasmic glucan (OPG) biosynthesis. Functionally, necessary for the succinyl substitution of periplasmic glucans. Could catalyze the transfer of succinyl residues from the cytoplasmic side of the membrane to the nascent glucan backbones on the periplasmic side of the membrane. The polypeptide is Glucans biosynthesis protein C (Shigella dysenteriae serotype 1 (strain Sd197)).